The chain runs to 529 residues: MSIMGLKVNVSAIFMAVLLTLQTPTGQIHWGNLSKIGVVGIGSASYKVMTRSSHQSLVIKLMPNITLLNNCTRVEIAEYRRLLRTVLEPIRDALNAMTQNIRLVQSVASSRRHKRFAGVVLAGAALGVATAAQITAGIALHQSMLSSQAIDNLRASLETTNQAIEAIRQAGQEMILAVQGVQDYINNELIPSMNQLSCDLIGQKLGLKLLRYYTEILSLFGPSLRDPISAEISIQALSYALGGDINKVLEKLGYSGGDLLGILESRGIKARITHVDTESYFIVLSIAYPTLSEIKEVIVHRLEGVSYNIGSQEWYTTVPKYVATQGYLISNFDESSCTFMPEGTVCSQNALYPMSPLLQECLRGSTKSCARTLVSGSFGNRFILSQGNLIANCASILCKCYTTGTIIRQDPDKILTYIAADHCPVVEVNGVTIQVGSRRYPDAVDLHRIDLGPPISLERLDVGTNLGSAIAKLEDAKELLESSDQILRSMKGLSSTSIVYILIAVCLGGLIGIPALICCCRGRCNKKGE.

Positions 1–26 (MSIMGLKVNVSAIFMAVLLTLQTPTG) are cleaved as a signal peptide. The Extracellular segment spans residues 27 to 490 (QIHWGNLSKI…ESSDQILRSM (464 aa)). Asn-32, Asn-64, and Asn-70 each carry an N-linked (GlcNAc...) asparagine; by host glycan. The interval 72–98 (TRVEIAEYRRLLRTVLEPIRDALNAMT) is HRC. The fusion peptide stretch occupies residues 116–141 (FAGVVLAGAALGVATAAQITAGIALH). Positions 141–169 (HQSMLSSQAIDNLRASLETTNQAIEAIRQ) form a coiled coil. The interval 142 to 218 (QSMLSSQAID…LLRYYTEILS (77 aa)) is HRA. Intrachain disulfides connect Cys-337-Cys-346, Cys-361-Cys-369, Cys-393-Cys-398, and Cys-400-Cys-423. The interval 370-447 (ARTLVSGSFG…RRYPDAVDLH (78 aa)) is interaction with hemagglutinin. The segment at 448–497 (RIDLGPPISLERLDVGTNLGSAIAKLEDAKELLESSDQILRSMKGLSSTS) is HRB. The stretch at 465–490 (NLGSAIAKLEDAKELLESSDQILRSM) forms a coiled coil. The helical transmembrane segment at 491–521 (KGLSSTSIVYILIAVCLGGLIGIPALICCCR) threads the bilayer. The Cytoplasmic portion of the chain corresponds to 522 to 529 (GRCNKKGE).

It belongs to the paramyxoviruses fusion glycoprotein family. Homotrimer of disulfide-linked F1-F2. In terms of processing, the inactive precursor F0 is glycosylated and proteolytically cleaved into F1 and F2 to be functionally active. The cleavage is mediated by host furin during the transport and maturation of the polypeptide.

It localises to the virion membrane. It is found in the host cell membrane. In terms of biological role, class I viral fusion protein. Under the current model, the protein has at least 3 conformational states: pre-fusion native state, pre-hairpin intermediate state, and post-fusion hairpin state. During viral and plasma cell membrane fusion, the heptad repeat (HR) regions assume a trimer-of-hairpins structure, positioning the fusion peptide in close proximity to the C-terminal region of the ectodomain. The formation of this structure appears to drive apposition and subsequent fusion of viral and plasma cell membranes. Directs fusion of viral and cellular membranes leading to delivery of the nucleocapsid into the cytoplasm. This fusion is pH independent and occurs directly at the outer cell membrane. During viral entry or virus-mediated fusion between infected cells and neighboring susceptible cells, the head domain of the H protein initially binds to its receptor and then the stalk region of the H protein transmits the fusion-triggering signal to the F protein. Upon HN binding to its cellular receptor, the hydrophobic fusion peptide is unmasked and interacts with the cellular membrane, inducing the fusion between cell and virion membranes. Later in infection, F proteins expressed at the plasma membrane of infected cells could mediate fusion with adjacent cells to form syncytia, a cytopathic effect that could lead to tissue necrosis. Functionally, some hyperfusogenic isolates can induce membrane fusion in SLAM- and nectin-4-negative cells and are linked to fatal subacute sclerosing panencephalitis (SSPE) or measles inclusion body encephalitis (MIBE). The neuropathogenicity is closely associated with enhanced propagation mediated by cell-to-cell fusion in the brain, which is principally regulated by hyperfusogenic mutations of the viral F protein. Cell-to-cell transmission of the virus also occurs with hyperfusogenic isolates. The chain is Fusion glycoprotein F0 (F) from Homo sapiens (Human).